Consider the following 207-residue polypeptide: LexA repressor (207 aa).

Residues 28-48 (VREIGEAVGLASSSTVHGHLA) constitute a DNA-binding region (H-T-H motif). Active-site for autocatalytic cleavage activity residues include S129 and K167.

This sequence belongs to the peptidase S24 family. As to quaternary structure, homodimer.

The enzyme catalyses Hydrolysis of Ala-|-Gly bond in repressor LexA.. Represses a number of genes involved in the response to DNA damage (SOS response), including recA and lexA. In the presence of single-stranded DNA, RecA interacts with LexA causing an autocatalytic cleavage which disrupts the DNA-binding part of LexA, leading to derepression of the SOS regulon and eventually DNA repair. In Geobacillus thermodenitrificans (strain NG80-2), this protein is LexA repressor.